Reading from the N-terminus, the 1597-residue chain is MRDAIAEPVPPPALADTPAAAMEELRPAPPPQPEPDPECCPAARQECMLGESARKSMESDPEDFSDETNTETLYGTSPPSTPRQMKRLSAKHQRNSAGRPASRSNLKEKMNTPSQSPHKDLGKGVETVEEYSYKQEKKIRATLRTTERDHKKNAQCSFMLDSVAGSLPKKSIPDVDLNKPYLSLGCSNAKLPVSMPMPIARTARQTSRTDCPADRLKFFETLRLLLKLTSVSKKKDREQRGQENTAAFWFNRSNELIWLELQAWHAGRTINDQDLFLYTARQAIPDIINEILTFKVNYGSIAFSSNGAGFNGPLVEGQCRTPQETNRVGCSSYHEHLQRQRVSFEQVKRIMELLEYMEALYPSLQALQKDYERYAAKDFEDRVQALCLWLNITKDLNQKLRIMGTVLGIKNLSDIGWPVFEIPSPRPSKGYEPEDEVEDTEVELRELESGTEESDEEPTPSPRVPELRLSTDAILDSRSQGCVSRKLERLESEEDSIGWGTADCGPEASRHCLTSIYRPFVDKALKQMGLRKLILRLHKLMNGSLQRARVALVKDDRPVEFSDFPGPMWGSDYVQLSGTPPSSEQKCSAVSWEELRAMDLPSFEPAFLVLCRVLLNVIHECLKLRLEQRPAGEPSLLSIKQLVRECKEVLKGGLLMKQYYQFMLQEVLGGLEKTDCNMDAFEEDLQKMLMVYFDYMRSWIQMLQQLPQASHSLKNLLEEEWNFTKEITHYIRGGEAQAGKLFCDIAGMLLKSTGSFLESGLQESCAELWTSADDNGAADELRRSVIEISRALKELFHEARERASKALGFAKMLRKDLEIAAEFVLSASARELLDALKAKQYVKVQIPGLENLHVFVPDSLAEEKKIILQLLNAATGKDCSKDPDDVFMDAFLLLTKHGDRARDSEDGWGTWEARAVKIVPQVETVDTLRSMQVDNLLLVVMESAHLVLQRKAFQQSIEGLMTVRHEQTSSQPIIAKGLQQLKNDALELCNRISDAIDRVDHMFTLEFDAEVEESESATLQQYYREAMIQGYNFGFEYHKEVVRLMSGEFRQKIGDKYISFAQKWMNYVLTKCESGRGTRPRWATQGFDFLQAIEPAFISALPEDDFLSLQALMNECIGHVIGKPHSPVTAIHRNSPRPVKVPRCHSDPPNPHLIIPTPEGFSTRSVPSDARTHGNSVAAAAAVAAAATTAAGRPGPGGGDSVPAKPVNTAPDTRGSSVPENDRLASIAAELQFRSLSRHSSPTEERDEPAYPRSDSSGSTRRSWELRTLISQTKDSASKQGPIEAIQKSVRLFEERRYREMRRKNIIGQVCDTPKSYDNVMHVGLRKVTFKWQRGNKIGEGQYGKVYTCISVDTGELMAMKEIRFQPNDHKTIKETADELKIFEGIKHPNLVRYFGVELHREEMYIFMEYCDEGTLEEVSRLGLQEHVIRLYTKQITVAINVLHEHGIVHRDIKGANIFLTSSGLIKLGDFGCSVKLKNNAQTMPGEVNSTLGTAAYMAPEVITRAKGEGHGRAADIWSLGCVVIEMVTGKRPWHEYEHNFQIMYKVGMGHKPPIPERLSPEGKAFLSHCLESDPKIRWTASQLLDHAFVKVCTDEE.

2 disordered regions span residues 1 to 128 and 424 to 465; these read MRDA…VETV and SPRP…PRVP. The segment covering 59-69 has biased composition (acidic residues); that stretch reads SDPEDFSDETN. Ser-77 carries the post-translational modification Phosphoserine. Basic residues predominate over residues 84 to 94; sequence QMKRLSAKHQR. Ser-424 carries the post-translational modification Phosphoserine. Residue Thr-440 is modified to Phosphothreonine. Position 449 is a phosphoserine (Ser-449). Acidic residues predominate over residues 449-458; that stretch reads SGTEESDEEP. Position 451 is a phosphothreonine (Thr-451). 2 positions are modified to phosphoserine: Ser-454 and Ser-492. Disordered stretches follow at residues 1137 to 1157, 1190 to 1220, and 1233 to 1263; these read RPVKVPRCHSDPPNPHLIIPT, AAGRPGPGGGDSVPAKPVNTAPDTRGSSVPE, and FRSLSRHSSPTEERDEPAYPRSDSSGSTRRS. Residues 1210-1219 show a composition bias toward polar residues; sequence APDTRGSSVP. A phosphoserine mark is found at Ser-1241 and Ser-1263. A compositionally biased stretch (basic and acidic residues) spans 1241 to 1250; it reads SPTEERDEPA. The 259-residue stretch at 1332 to 1590 folds into the Protein kinase domain; sequence WQRGNKIGEG…ASQLLDHAFV (259 aa). ATP is bound by residues 1338–1346 and Lys-1361; that span reads IGEGQYGKV. Asp-1452 functions as the Proton acceptor in the catalytic mechanism.

The protein belongs to the protein kinase superfamily. STE Ser/Thr protein kinase family. MAP kinase kinase kinase subfamily. As to quaternary structure, monomer and homodimer. Homodimerization enhances kinase activity. Interacts with CDC42. Interacts with TRAF4; this promotes homodimerization. Binds both upstream activators and downstream substrates in multimolecular complexes. Interacts with AXIN1 and DIXDC1; interaction with DIXDC1 prevents interaction with AXIN1. Interacts with GADD45 and MAP2K6. Interacts with ZFP36; this interaction enhances the association with SH3KBP1/CIN85. Interacts with SH3KBP1; this interaction enhances the association with ZFP36. Mg(2+) serves as cofactor. In terms of tissue distribution, widely expressed. High expression was found in skeletal muscle, kidney, testis followed by heart brain and lung. Low expression was found in spleen.

It is found in the cytoplasm. Its subcellular location is the perinuclear region. The enzyme catalyses L-seryl-[protein] + ATP = O-phospho-L-seryl-[protein] + ADP + H(+). It carries out the reaction L-threonyl-[protein] + ATP = O-phospho-L-threonyl-[protein] + ADP + H(+). With respect to regulation, N-terminal autoinhibitory domain interacts with the C-terminal kinase domain, inhibiting kinase activity, and preventing interaction with its substrate, MAP2K6. The GADD45 proteins activate the kinase by binding to the N-terminal domain. Activated by phosphorylation on Thr-1494. Its function is as follows. Component of a protein kinase signal transduction cascade. Activates the CSBP2, P38 and JNK MAPK pathways, but not the ERK pathway. Specifically phosphorylates and activates MAP2K4 and MAP2K6. This Mus musculus (Mouse) protein is Mitogen-activated protein kinase kinase kinase 4 (Map3k4).